The sequence spans 384 residues: DNA dC-&gt;dU-editing enzyme APOBEC-3G (384 aa).

An essential for cytoplasmic localization region spans residues 1 to 60 (MNPQFRNMVDGMDPHKFSYNFKNRPILSRRNTVWLCYEVKTKGPSRPPLDAKIFRGQVYF). CMP/dCMP-type deaminase domains lie at 29 to 138 (RRNT…LRSL) and 214 to 328 (GRHE…LRTL). T32 bears the Phosphothreonine; by PKA mark. 3 residues coordinate Zn(2+): H65, C97, and C100. Residues 209–336 (EPCVEGRHET…TLDEAEAKIS (128 aa)) are necessary for homooligomerization. Residues 213–215 (EGR) are interaction with DNA. T218 carries the post-translational modification Phosphothreonine; by PKA and CAMK2. Position 257 (H257) interacts with Zn(2+). E259 serves as the catalytic Proton donor. The Zn(2+) site is built by C288 and C291. Positions 313-320 (RIYDDQGR) are interaction with DNA.

The protein belongs to the cytidine and deoxycytidylate deaminase family. Homodimer. The cofactor is Zn(2+).

It localises to the cytoplasm. Its subcellular location is the nucleus. It is found in the P-body. The catalysed reaction is a 2'-deoxycytidine in single-stranded DNA + H2O + H(+) = a 2'-deoxyuridine in single-stranded DNA + NH4(+). In terms of biological role, DNA deaminase (cytidine deaminase) which acts as an inhibitor of retrovirus replication and retrotransposon mobility. After the penetration of retroviral nucleocapsids into target cells of infection and the initiation of reverse transcription, it can induce the conversion of cytosine to uracil in the minus-sense single-strand viral DNA, leading to G-to-A hypermutations in the subsequent plus-strand viral DNA. The resultant detrimental levels of mutations in the proviral genome, along with a deamination-independent mechanism that works prior to the proviral integration, together exert efficient antiretroviral effects in infected target cells. Selectively targets single-stranded DNA and does not deaminate double-stranded DNA or single- or double-stranded RNA. This chain is DNA dC-&gt;dU-editing enzyme APOBEC-3G (APOBEC3G), found in Pongo pygmaeus (Bornean orangutan).